The chain runs to 279 residues: Digeranylgeranylglyceryl phosphate synthase (279 aa).

Transmembrane regions (helical) follow at residues 16–36 (LIAG…LPPI), 40–60 (LLIF…NDYF), 77–99 (GALS…ILIA), 104–121 (FEAF…YLYA), 124–144 (LKPQ…ITPI), 146–166 (GAIA…AFLV), 192–212 (IVWG…ATII), 220–240 (AGIG…LWAA), and 259–279 (LKIA…TKGV).

This sequence belongs to the UbiA prenyltransferase family. DGGGP synthase subfamily. The cofactor is Mg(2+).

Its subcellular location is the cell membrane. The enzyme catalyses sn-3-O-(geranylgeranyl)glycerol 1-phosphate + (2E,6E,10E)-geranylgeranyl diphosphate = 2,3-bis-O-(geranylgeranyl)-sn-glycerol 1-phosphate + diphosphate. Its pathway is membrane lipid metabolism; glycerophospholipid metabolism. Its function is as follows. Prenyltransferase that catalyzes the transfer of the geranylgeranyl moiety of geranylgeranyl diphosphate (GGPP) to the C2 hydroxyl of (S)-3-O-geranylgeranylglyceryl phosphate (GGGP). This reaction is the second ether-bond-formation step in the biosynthesis of archaeal membrane lipids. This is Digeranylgeranylglyceryl phosphate synthase from Thermococcus sibiricus (strain DSM 12597 / MM 739).